We begin with the raw amino-acid sequence, 368 residues long: GTPase Obg (368 aa).

The region spanning 1–161 (MRFVDEATIT…RSLRLELKIL (161 aa)) is the Obg domain. One can recognise an OBG-type G domain in the interval 162 to 337 (ADAGLLGLPN…VVAEMWRMRD (176 aa)). Residues 168-175 (GLPNAGKS), 193-197 (FTTLI), 217-220 (DIPG), 290-293 (NKID), and 318-320 (SAL) contribute to the GTP site. Mg(2+) is bound by residues Ser175 and Thr195.

Belongs to the TRAFAC class OBG-HflX-like GTPase superfamily. OBG GTPase family. Monomer. The cofactor is Mg(2+).

Its subcellular location is the cytoplasm. Functionally, an essential GTPase which binds GTP, GDP and possibly (p)ppGpp with moderate affinity, with high nucleotide exchange rates and a fairly low GTP hydrolysis rate. Plays a role in control of the cell cycle, stress response, ribosome biogenesis and in those bacteria that undergo differentiation, in morphogenesis control. The chain is GTPase Obg from Nitratidesulfovibrio vulgaris (strain DSM 19637 / Miyazaki F) (Desulfovibrio vulgaris).